We begin with the raw amino-acid sequence, 295 residues long: 2-methylisocitrate lyase (295 aa).

45–47 lines the substrate pocket; the sequence is SGG. Mg(2+)-binding residues include aspartate 85 and aspartate 87. Residues 123–124, arginine 158, glutamate 188, 210–212, arginine 241, and arginine 270 each bind substrate; these read CG and NIT.

Belongs to the isocitrate lyase/PEP mutase superfamily. Methylisocitrate lyase family. In terms of assembly, homotetramer; dimer of dimers. Mg(2+) serves as cofactor.

The enzyme catalyses (2S,3R)-3-hydroxybutane-1,2,3-tricarboxylate = pyruvate + succinate. Its pathway is organic acid metabolism; propanoate degradation. Involved in the catabolism of short chain fatty acids (SCFA) via the 2-methylcitrate cycle I (propionate degradation route). Catalyzes the thermodynamically favored C-C bond cleavage of (2R,3S)-2-methylisocitrate to yield pyruvate and succinate via an alpha-carboxy-carbanion intermediate. In Salmonella typhimurium (strain LT2 / SGSC1412 / ATCC 700720), this protein is 2-methylisocitrate lyase.